Here is a 320-residue protein sequence, read N- to C-terminus: Homoserine kinase (320 aa).

100–110 provides a ligand contact to ATP; sequence PLSSGMGSSAA.

This sequence belongs to the GHMP kinase family. Homoserine kinase subfamily.

It is found in the cytoplasm. The enzyme catalyses L-homoserine + ATP = O-phospho-L-homoserine + ADP + H(+). Its pathway is amino-acid biosynthesis; L-threonine biosynthesis; L-threonine from L-aspartate: step 4/5. Its function is as follows. Catalyzes the ATP-dependent phosphorylation of L-homoserine to L-homoserine phosphate. This chain is Homoserine kinase, found in Chlorobium phaeobacteroides (strain DSM 266 / SMG 266 / 2430).